Here is an 817-residue protein sequence, read N- to C-terminus: TPR repeat-containing protein C19B12.01 (817 aa).

Disordered regions lie at residues D276–P298 and G386–N413. TPR repeat units lie at residues L459–D492, A521–S554, Y555–D588, and W625–D658.

This Schizosaccharomyces pombe (strain 972 / ATCC 24843) (Fission yeast) protein is TPR repeat-containing protein C19B12.01.